The primary structure comprises 356 residues: Tyrosine recombinase XerS (356 aa).

The Core-binding (CB) domain occupies 16 to 121 (LMPWYVLEYY…ALSSLYKYLT (106 aa)). The 186-residue stretch at 169–354 (GFLTYIDQEH…VNDEQKNALD (186 aa)) folds into the Tyr recombinase domain. Catalysis depends on residues arginine 210, lysine 234, histidine 306, arginine 309, and histidine 332. Tyrosine 341 functions as the O-(3'-phospho-DNA)-tyrosine intermediate in the catalytic mechanism.

It belongs to the 'phage' integrase family. XerS subfamily.

It is found in the cytoplasm. With respect to regulation, ftsK is required for recombination. In terms of biological role, site-specific tyrosine recombinase, which acts by catalyzing the cutting and rejoining of the recombining DNA molecules. Essential to convert dimers of the bacterial chromosome into monomers to permit their segregation at cell division. The sequence is that of Tyrosine recombinase XerS from Streptococcus pneumoniae serotype 19F (strain G54).